Reading from the N-terminus, the 434-residue chain is Bcl-2-like protein 13 (434 aa).

The BH4 motif lies at 14–30; sequence ETKYVVLSYLGLLSQEK. The residue at position 35 (S35) is a Phosphoserine. Residues 97 to 113 carry the BH3 motif; sequence IEDCLAHLGERVSQDLK. The BH1 signature appears at 144–154; sequence ASGWNKLLVPL. The BH2 motif lies at 190 to 203; that stretch reads FIIQQGGWGSVFSL. Residues 224 to 245 are disordered; that stretch reads LPSDNSGQVSPPESPTVTTSWQ. The segment covering 226 to 245 has biased composition (polar residues); sequence SDNSGQVSPPESPTVTTSWQ. The stretch at 243–253 is one A repeat; sequence SWQSESLPVSL. Phosphoserine is present on residues S256, S258, S300, S343, S347, S377, and S387. One copy of the A; approximate repeat lies at 258–268; it reads SWHTESLPVSL. Residues 282–303 are disordered; it reads EVKSLDSSGAGEKSENNSSNSD. The segment at 363-398 is disordered; it reads RPEAVERAEGAAQLSEERAGSRKKSHTGEAAAVRGA. A compositionally biased stretch (basic and acidic residues) spans 365–382; it reads EAVERAEGAAQLSEERAG. The helical transmembrane segment at 409-429 threads the bilayer; the sequence is VLLFGGAAAVAILAVAVGVAL.

The protein belongs to the Bcl-2 family. In terms of assembly, monomer.

It is found in the mitochondrion membrane. Functionally, may promote the activation of caspase-3 and apoptosis. In Mus musculus (Mouse), this protein is Bcl-2-like protein 13 (Bcl2l13).